Consider the following 170-residue polypeptide: Peptide deformylase (170 aa).

Fe cation contacts are provided by C92 and H134. Residue E135 is part of the active site. H138 is a binding site for Fe cation.

It belongs to the polypeptide deformylase family. Fe(2+) serves as cofactor.

It catalyses the reaction N-terminal N-formyl-L-methionyl-[peptide] + H2O = N-terminal L-methionyl-[peptide] + formate. In terms of biological role, removes the formyl group from the N-terminal Met of newly synthesized proteins. Requires at least a dipeptide for an efficient rate of reaction. N-terminal L-methionine is a prerequisite for activity but the enzyme has broad specificity at other positions. The polypeptide is Peptide deformylase (Chromohalobacter salexigens (strain ATCC BAA-138 / DSM 3043 / CIP 106854 / NCIMB 13768 / 1H11)).